The chain runs to 243 residues: Cytochrome c1, heme protein (243 aa).

At 1 to 201 (GVDSHPPALP…CSNPWWDERK (201 aa)) the chain is on the mitochondrial intermembrane side. A Cytochrome c domain is found at 5 to 194 (HPPALPWPHF…VTCFLEWCSN (190 aa)). Residues Cys-39, His-40, and Met-159 each contribute to the heme site. Residues 202–221 (LLGYKTIATLAVIAVSSGYY) form a helical membrane-spanning segment. Residues 222–243 (NRFLSGLWRSRRLAFRPFNYSK) are Mitochondrial matrix-facing.

The protein belongs to the cytochrome c family. In terms of assembly, component of the ubiquinol-cytochrome c oxidoreductase (cytochrome b-c1 complex, complex III, CIII), a multisubunit enzyme composed of 3 respiratory subunits cytochrome b, cytochrome c1 and Rieske protein, 2 core protein subunits, and additional low-molecular weight protein subunits. The complex exists as an obligatory dimer and forms supercomplexes (SCs) in the inner mitochondrial membrane with cytochrome c oxidase (complex IV, CIV). It depends on heme as a cofactor.

It localises to the mitochondrion inner membrane. It catalyses the reaction a quinol + 2 Fe(III)-[cytochrome c](out) = a quinone + 2 Fe(II)-[cytochrome c](out) + 2 H(+)(out). Functionally, component of the ubiquinol-cytochrome c oxidoreductase, a multisubunit transmembrane complex that is part of the mitochondrial electron transport chain which drives oxidative phosphorylation. The respiratory chain contains 3 multisubunit complexes succinate dehydrogenase (complex II, CII), ubiquinol-cytochrome c oxidoreductase (cytochrome b-c1 complex, complex III, CIII) and cytochrome c oxidase (complex IV, CIV), that cooperate to transfer electrons derived from NADH and succinate to molecular oxygen, creating an electrochemical gradient over the inner membrane that drives transmembrane transport and the ATP synthase. The cytochrome b-c1 complex catalyzes electron transfer from ubiquinol to cytochrome c, linking this redox reaction to translocation of protons across the mitochondrial inner membrane, with protons being carried across the membrane as hydrogens on the quinol. In the process called Q cycle, 2 protons are consumed from the matrix, 4 protons are released into the intermembrane space and 2 electrons are passed to cytochrome c. Cytochrome c1 is a catalytic core subunit containing a c-type heme. It transfers electrons from the [2Fe-2S] iron-sulfur cluster of the Rieske protein to cytochrome c. This is Cytochrome c1, heme protein from Euglena gracilis.